A 302-amino-acid chain; its full sequence is Bifunctional protein FolD (302 aa).

Residues 165-167 (GRS), Ser-190, and Ile-231 contribute to the NADP(+) site.

This sequence belongs to the tetrahydrofolate dehydrogenase/cyclohydrolase family. Homodimer.

The catalysed reaction is (6R)-5,10-methylene-5,6,7,8-tetrahydrofolate + NADP(+) = (6R)-5,10-methenyltetrahydrofolate + NADPH. The enzyme catalyses (6R)-5,10-methenyltetrahydrofolate + H2O = (6R)-10-formyltetrahydrofolate + H(+). It functions in the pathway one-carbon metabolism; tetrahydrofolate interconversion. Catalyzes the oxidation of 5,10-methylenetetrahydrofolate to 5,10-methenyltetrahydrofolate and then the hydrolysis of 5,10-methenyltetrahydrofolate to 10-formyltetrahydrofolate. This is Bifunctional protein FolD from Prochlorococcus marinus (strain SARG / CCMP1375 / SS120).